A 526-amino-acid chain; its full sequence is Peptide chain release factor 3 (526 aa).

In terms of domain architecture, tr-type G spans 8–277 (NKRRTFAIIS…GLTQWAPAPQ (270 aa)). GTP is bound by residues 17–24 (SHPDAGKT), 85–89 (DTPGH), and 139–142 (NKLD).

This sequence belongs to the TRAFAC class translation factor GTPase superfamily. Classic translation factor GTPase family. PrfC subfamily.

It localises to the cytoplasm. Functionally, increases the formation of ribosomal termination complexes and stimulates activities of RF-1 and RF-2. It binds guanine nucleotides and has strong preference for UGA stop codons. It may interact directly with the ribosome. The stimulation of RF-1 and RF-2 is significantly reduced by GTP and GDP, but not by GMP. In Histophilus somni (strain 2336) (Haemophilus somnus), this protein is Peptide chain release factor 3.